Consider the following 152-residue polypeptide: Ribonuclease pancreatic gamma-type (152 aa).

An N-terminal signal peptide occupies residues 1-25 (MGLEKSLFLFSLLVLVLGWVQPSLG). The substrate site is built by Lys-35 and Arg-38. The active-site Proton acceptor is the His-40. 4 cysteine pairs are disulfide-bonded: Cys-54–Cys-112, Cys-68–Cys-123, Cys-86–Cys-138, and Cys-93–Cys-100. Residues 69 to 73 (KSMNT), Lys-94, and Arg-113 each bind substrate. His-147 (proton donor) is an active-site residue.

The protein belongs to the pancreatic ribonuclease family. As to quaternary structure, monomer.

The protein resides in the secreted. It carries out the reaction an [RNA] containing cytidine + H2O = an [RNA]-3'-cytidine-3'-phosphate + a 5'-hydroxy-ribonucleotide-3'-[RNA].. It catalyses the reaction an [RNA] containing uridine + H2O = an [RNA]-3'-uridine-3'-phosphate + a 5'-hydroxy-ribonucleotide-3'-[RNA].. Its function is as follows. Endonuclease that catalyzes the cleavage of RNA on the 3' side of pyrimidine nucleotides. Acts on single-stranded and double-stranded RNA. The sequence is that of Ribonuclease pancreatic gamma-type from Rattus norvegicus (Rat).